Reading from the N-terminus, the 99-residue chain is Transmembrane protein 14A (99 aa).

3 helical membrane passes run 1–21 (MDLIGFGYAALVTFGSILGYK), 24–44 (GGVLSLIAGLFVGFLAGYGAY), and 79–99 (PAGLVAGLSLLMILRLVLLLL).

It belongs to the TMEM14 family.

The protein localises to the mitochondrion membrane. It localises to the endoplasmic reticulum membrane. Functionally, inhibits apoptosis via negative regulation of the mitochondrial outer membrane permeabilization involved in apoptotic signaling pathway. The sequence is that of Transmembrane protein 14A (TMEM14A) from Bos taurus (Bovine).